Reading from the N-terminus, the 129-residue chain is Small ribosomal subunit protein uS9 (129 aa).

The interval 108–129 is disordered; the sequence is RMVERKKYGKKKARKSFQFSKR. Over residues 114 to 129 the composition is skewed to basic residues; the sequence is KYGKKKARKSFQFSKR.

Belongs to the universal ribosomal protein uS9 family.

The protein is Small ribosomal subunit protein uS9 of Chlorobaculum tepidum (strain ATCC 49652 / DSM 12025 / NBRC 103806 / TLS) (Chlorobium tepidum).